The chain runs to 138 residues: Large ribosomal subunit protein uL16 (138 aa).

Positions 1–17 (MLIPRKVKHRKQHHPRQ) are enriched in basic residues. The interval 1–24 (MLIPRKVKHRKQHHPRQRGIASGG) is disordered.

Belongs to the universal ribosomal protein uL16 family. Part of the 50S ribosomal subunit.

Binds 23S rRNA and is also seen to make contacts with the A and possibly P site tRNAs. The sequence is that of Large ribosomal subunit protein uL16 from Mycolicibacterium gilvum (strain PYR-GCK) (Mycobacterium gilvum (strain PYR-GCK)).